We begin with the raw amino-acid sequence, 380 residues long: Omega-3 fatty acid desaturase, endoplasmic reticulum (380 aa).

The chain crosses the membrane as a helical span at residues 59 to 78 (VLVVTALAASAISFNSWFFW). The short motif at 97–101 (HDCGH) is the Histidine box-1 element. The Histidine box-2 signature appears at 133 to 137 (HRTHH). A run of 2 helical transmembrane segments spans residues 208 to 231 (GVVT…LTIG) and 238 to 256 (LYGV…VTYL). Positions 300 to 304 (HVIHH) match the Histidine box-3 motif.

Belongs to the fatty acid desaturase type 1 family.

It is found in the endoplasmic reticulum membrane. It participates in lipid metabolism; polyunsaturated fatty acid biosynthesis. Functionally, microsomal (ER) omega-3 fatty acid desaturase introduces the third double bond in the biosynthesis of 18:3 fatty acids, important constituents of plant membranes. It is thought to use cytochrome b5 as an electron donor and to act on fatty acids esterified to phosphatidylcholine and, possibly, other phospholipids. This Vigna radiata var. radiata (Mung bean) protein is Omega-3 fatty acid desaturase, endoplasmic reticulum (ARG1).